Here is a 130-residue protein sequence, read N- to C-terminus: Capsid protein (130 aa).

Residues 32–105 form a viral RNA-binding region; sequence EWISSNSRSQ…FATNDDCALI (74 aa).

Belongs to the Leviviricetes capsid protein family. As to quaternary structure, homodimer. The capsid proteins form dimers that assemble by group of 5. Twelve such pentamers are linked together with free dimers. The homodimers binds to the viral RNA via an operator hairpin, but also to many other RNA sequences in the viral genome; this interaction probably shifts the virus from the replicative to the assembly phase and ensures specific encapsidation of the viral genome.

The protein localises to the virion. Capsid protein self-assembles to form an icosahedral capsid with a T=3 symmetry, about 26 nm in diameter, and consisting of 89 capsid proteins dimers (178 capsid proteins). Involved in viral genome encapsidation through the interaction between a capsid protein dimer and the multiple packaging signals present in the RNA genome. The capsid also contains 1 copy of the A2 maturation protein. Its function is as follows. Acts as a translational repressor of viral replicase synthesis late in infection. This latter function is the result of capsid protein interaction with an RNA hairpin which contains the replicase ribosome-binding site. The polypeptide is Capsid protein (Enterobacteria phage fr (Bacteriophage fr)).